The sequence spans 467 residues: MRNTIGVIGLGVMGSNIALNMASKGEQVAVYNYTRDLTDQLVQKTGGQTVKPYYELEDFVQSLEKPRKIFLMVTAGKPVDSVIDSLVPLLEEGDVIMDGGNSHYEDTERRYDSLKAKGIGYLGIGISGGEVGALKGPSIMPGGDRDVYEKAAPILTKIAAQVEGDPCCVYIGPKGAGHFVKMVHNGIEYADMQLIAEAYTFLREKLLLPIDEIADIFDTWNQGELKSYLIEITAEILRKKDERTGAPLIDVILDKTGQKGTGKWTSLQAIDNGIPSSIITESLFARYLSSLKDERTAAENVLAGPETEERPLDQNVWIDRVRQALYMGKVCAYAQGFAQYKMTSDLNGWHLPLKDIALIFRGGCIIRAQFLNLISEVYDKQPDLSNLLVAPDFAEKLKEYQSGLRKVVCEGISSGISFPCLSTALSYYDGYRTGRSNANLLQAQANYFGAHTYERTDMEGVFHTDWY.

Residues 9–14, 32–34, 73–75, and asparagine 101 each bind NADP(+); these read GLGVMG, NYT, and VTA. Substrate contacts are provided by residues asparagine 101 and 127–129; that span reads SGG. Lysine 181 functions as the Proton acceptor in the catalytic mechanism. A substrate-binding site is contributed by 184–185; that stretch reads HN. The active-site Proton donor is glutamate 188. The substrate site is built by tyrosine 189, lysine 259, arginine 286, and histidine 451.

Belongs to the 6-phosphogluconate dehydrogenase family. Homodimer.

It catalyses the reaction 6-phospho-D-gluconate + NADP(+) = D-ribulose 5-phosphate + CO2 + NADPH. Its pathway is carbohydrate degradation; pentose phosphate pathway; D-ribulose 5-phosphate from D-glucose 6-phosphate (oxidative stage): step 3/3. Catalyzes the oxidative decarboxylation of 6-phosphogluconate to ribulose 5-phosphate and CO(2), with concomitant reduction of NADP to NADPH. In Bacillus licheniformis, this protein is 6-phosphogluconate dehydrogenase, decarboxylating (gntZ).